Reading from the N-terminus, the 1021-residue chain is tRNA wybutosine-synthesizing protein 4 (1021 aa).

S-adenosyl-L-methionine is bound by residues Arg-68, Asp-122, 171 to 172 (DL), and Glu-198. Residues 826–980 (PTEAPANLAE…STGRDVYGNR (155 aa)) enclose the JmjC domain.

It belongs to the methyltransferase superfamily. LCMT family.

The enzyme catalyses 7-[(3S)-3-amino-3-carboxypropyl]wyosine(37) in tRNA(Phe) + S-adenosyl-L-methionine = 7-[(3S)-(3-amino-3-methoxycarbonyl)propyl]wyosine(37) in tRNA(Phe) + S-adenosyl-L-homocysteine. The catalysed reaction is 7-[(3S)-(3-amino-3-methoxycarbonyl)propyl]wyosine(37) in tRNA(Phe) + S-adenosyl-L-methionine + CO2 = wybutosine(37) in tRNA(Phe) + S-adenosyl-L-homocysteine + 2 H(+). It participates in tRNA modification; wybutosine-tRNA(Phe) biosynthesis. Its function is as follows. Probable S-adenosyl-L-methionine-dependent methyltransferase that acts as a component of the wybutosine biosynthesis pathway. Wybutosine is a hyper modified guanosine with a tricyclic base found at the 3'-position adjacent to the anticodon of eukaryotic phenylalanine tRNA. May methylate the carboxyl group of leucine residues to form alpha-leucine ester residues. The polypeptide is tRNA wybutosine-synthesizing protein 4 (PPM2) (Gibberella zeae (strain ATCC MYA-4620 / CBS 123657 / FGSC 9075 / NRRL 31084 / PH-1) (Wheat head blight fungus)).